Reading from the N-terminus, the 563-residue chain is MANAEVSVPVGDVVVVPTEGNEGENPEDTKTQVILQLQPVQQGIYEAGSENNTAVVAVETHTIHKIEEGIDASTIEANEDMEIAYPITCGESKAILLWKKFVCPGINVKCVKFNDQLISPKHFVHLAGKSTLKDWKRAIRLGGIMLRKMMDSGQIDFYQHDKVCSNTCRSTKFDLLISSARAPVPGQQTSVVQTPTSADGSITQIAISEESMEEAGLEWNSALTAAVTMATEEGVKKDSEEISQDTLMFWKGIADVGLMEEVVCNIQKEIEELLRGVQQRLIQAPFQVTDAAVLNNVAHTFGLMDTVKKVLDNRKNQVEQGEEQFLYTLTDLERQLEEQKKQAQDHRLKSQTVQNVVLMPVSTPKPPKRPRLQRPASTTVLSPSPPVHQPQFTVISPITITPVGQSFSMGNIPVATLSQGSSPVTVHTLPSGPQLFRYATVVSSAKSSSPDTVTIHPSSSLALLSSTAMQDGSTLGNMTTMVSPVELVAMESGLTSAIQAVESTSEDGQTIIEIDPAPDPEAEDTEGKAVILETELRTEEKVVAEMEEHQHQVHNVEIVVLED.

The residue at position 2 (Ala-2) is an N-acetylalanine. One can recognise an SAND domain in the interval 72–156 (ASTIEANEDM…RKMMDSGQID (85 aa)). Zn(2+) is bound at residue Cys-103. Residues Lys-129, Lys-133, Lys-136, and Arg-147 each contribute to the DNA site. Zn(2+) contacts are provided by His-160, Cys-164, and Cys-168. Residues 304–355 (MDTVKKVLDNRKNQVEQGEEQFLYTLTDLERQLEEQKKQAQDHRLKSQTVQN) are a coiled coil. Residues 360-385 (PVSTPKPPKRPRLQRPASTTVLSPSP) form a disordered region.

As to quaternary structure, homodimer, and heterodimer of GMEB1 and GMEB2. Interacts with TRIM63. Interacts with the glucocorticoid receptor (NR3C1) and NCOA2/TIF2. May interact with HSP27 and CREB-binding protein (CBP).

It localises to the nucleus. Its subcellular location is the cytoplasm. In terms of biological role, trans-acting factor that binds to glucocorticoid modulatory elements (GME) present in the TAT (tyrosine aminotransferase) promoter and increases sensitivity to low concentrations of glucocorticoids. Also binds to the transferrin receptor promoter. In Bos taurus (Bovine), this protein is Glucocorticoid modulatory element-binding protein 1 (GMEB1).